A 562-amino-acid chain; its full sequence is Tetratricopeptide repeat protein 39A (562 aa).

TPR repeat units follow at residues 273–306 (AIFL…QQNW), 463–496 (CVVK…EKRI), and 504–537 (PNAM…YKNY).

It belongs to the TTC39 family.

This Xenopus tropicalis (Western clawed frog) protein is Tetratricopeptide repeat protein 39A (ttc39a).